A 244-amino-acid polypeptide reads, in one-letter code: tRNA pseudouridine synthase A (244 aa).

D53 acts as the Nucleophile in catalysis. Substrate is bound at residue Y111.

The protein belongs to the tRNA pseudouridine synthase TruA family. As to quaternary structure, homodimer.

The catalysed reaction is uridine(38/39/40) in tRNA = pseudouridine(38/39/40) in tRNA. In terms of biological role, formation of pseudouridine at positions 38, 39 and 40 in the anticodon stem and loop of transfer RNAs. This chain is tRNA pseudouridine synthase A, found in Bacillus sp. (strain KSM-64).